We begin with the raw amino-acid sequence, 141 residues long: Large ribosomal subunit protein uL11 (141 aa).

The protein belongs to the universal ribosomal protein uL11 family. Part of the ribosomal stalk of the 50S ribosomal subunit. Interacts with L10 and the large rRNA to form the base of the stalk. L10 forms an elongated spine to which L12 dimers bind in a sequential fashion forming a multimeric L10(L12)X complex. Post-translationally, one or more lysine residues are methylated.

Forms part of the ribosomal stalk which helps the ribosome interact with GTP-bound translation factors. This is Large ribosomal subunit protein uL11 from Prochlorococcus marinus (strain MIT 9211).